The primary structure comprises 381 residues: Homoserine O-succinyltransferase (381 aa).

The region spanning 45-360 is the AB hydrolase-1 domain; it reads NAVLVCHALN…PHGHDAFLLD (316 aa). S151 acts as the Nucleophile in catalysis. R221 lines the substrate pocket. Residues D321 and H354 contribute to the active site. D355 lines the substrate pocket.

The protein belongs to the AB hydrolase superfamily. MetX family. As to quaternary structure, homodimer.

The protein localises to the cytoplasm. It carries out the reaction L-homoserine + succinyl-CoA = O-succinyl-L-homoserine + CoA. It functions in the pathway amino-acid biosynthesis; L-methionine biosynthesis via de novo pathway; O-succinyl-L-homoserine from L-homoserine: step 1/1. Transfers a succinyl group from succinyl-CoA to L-homoserine, forming succinyl-L-homoserine. This is Homoserine O-succinyltransferase from Burkholderia pseudomallei (strain 1710b).